Consider the following 342-residue polypeptide: Voltage-gated hydrogen channel 1 (342 aa).

2 disordered regions span residues 1 to 20 and 74 to 102; these read MEGDNCNKSRHKSHNMINPN and FNDNNNHERPAPQEQSTQNTMISMQSEQK. The Cytoplasmic segment spans residues 1–148; that stretch reads MEGDNCNKSR…KLRHILHSKP (148 aa). The span at 86 to 102 shows a compositional bias: polar residues; it reads QEQSTQNTMISMQSEQK. Residues 149 to 169 traverse the membrane as a helical segment; the sequence is IHVAIIVLVVLDSFLVVGELL. Residues 170-185 are Extracellular-facing; the sequence is IDLKVIIVPHGNPAPE. The chain crosses the membrane as a helical span at residues 186-208; that stretch reads ILHGFSLSILSIFMVEIALKIIA. Residues 209 to 217 are Cytoplasmic-facing; that stretch reads DHRHFIHHK. Residues 218 to 238 traverse the membrane as a helical segment; it reads VEVLDAVVVVISFGVDIALIF. The Extracellular segment spans residues 239–247; it reads VGESEALAA. The helical transmembrane segment at 248–268 threads the bilayer; that stretch reads IGLLVILRLWRVFRIINGIIV. Residues 269 to 342 are Cytoplasmic-facing; that stretch reads TVKTKADDRV…HSTTTASADV (74 aa). The stretch at 271-315 forms a coiled coil; that stretch reads KTKADDRVHEIKKKNSELELQIHNLEEKLSQKEQDMSRLHEILRC.

The protein belongs to the hydrogen channel family. In terms of assembly, homodimer.

It localises to the membrane. The protein resides in the cell membrane. With respect to regulation, less sensitive to zinc ions as compared to the mammalian homologs. Its function is as follows. Mediates the voltage-dependent proton permeability of excitable membranes. Forms a proton-selective channel through which protons may pass in accordance with their electrochemical gradient. This is Voltage-gated hydrogen channel 1 (HVCN1) from Ciona intestinalis (Transparent sea squirt).